The primary structure comprises 197 residues: Ras-like protein rasB (197 aa).

A GTP-binding site is contributed by 13-20 (GGGGVGKS). Positions 35 to 43 (YDPTIEDSY) match the Effector region motif. Residues 60–64 (DTAGQ) and 119–122 (NKCD) contribute to the GTP site. The residue at position 194 (Cys-194) is a Cysteine methyl ester. Residue Cys-194 is the site of S-geranylgeranyl cysteine attachment. Positions 195 to 197 (LIL) are cleaved as a propeptide — removed in mature form.

This sequence belongs to the small GTPase superfamily. Ras family.

The protein resides in the cell membrane. The enzyme catalyses GTP + H2O = GDP + phosphate + H(+). Alternates between an inactive form bound to GDP and an active form bound to GTP. Activated by a guanine nucleotide-exchange factor (GEF) and inactivated by a GTPase-activating protein (GAP). Ras proteins bind GDP/GTP and possess intrinsic GTPase activity. This chain is Ras-like protein rasB (rasB), found in Dictyostelium discoideum (Social amoeba).